A 418-amino-acid polypeptide reads, in one-letter code: Light-independent protochlorophyllide reductase subunit N (418 aa).

Residues Cys17, Cys42, and Cys103 each contribute to the [4Fe-4S] cluster site.

Belongs to the BchN/ChlN family. As to quaternary structure, protochlorophyllide reductase is composed of three subunits; ChlL, ChlN and ChlB. Forms a heterotetramer of two ChlB and two ChlN subunits. [4Fe-4S] cluster serves as cofactor.

It catalyses the reaction chlorophyllide a + oxidized 2[4Fe-4S]-[ferredoxin] + 2 ADP + 2 phosphate = protochlorophyllide a + reduced 2[4Fe-4S]-[ferredoxin] + 2 ATP + 2 H2O. Its pathway is porphyrin-containing compound metabolism; chlorophyll biosynthesis (light-independent). Functionally, component of the dark-operative protochlorophyllide reductase (DPOR) that uses Mg-ATP and reduced ferredoxin to reduce ring D of protochlorophyllide (Pchlide) to form chlorophyllide a (Chlide). This reaction is light-independent. The NB-protein (ChlN-ChlB) is the catalytic component of the complex. This Prochlorococcus marinus (strain MIT 9313) protein is Light-independent protochlorophyllide reductase subunit N.